Reading from the N-terminus, the 397-residue chain is Phosphoglycerate kinase (397 aa).

Substrate contacts are provided by residues 25–27 (DLN), Arg-41, 64–67 (HLGR), Arg-118, and Arg-151. ATP is bound by residues Lys-202, Glu-324, and 350-353 (GGDT).

Belongs to the phosphoglycerate kinase family. Monomer.

Its subcellular location is the cytoplasm. The catalysed reaction is (2R)-3-phosphoglycerate + ATP = (2R)-3-phospho-glyceroyl phosphate + ADP. Its pathway is carbohydrate degradation; glycolysis; pyruvate from D-glyceraldehyde 3-phosphate: step 2/5. In Leptothrix cholodnii (strain ATCC 51168 / LMG 8142 / SP-6) (Leptothrix discophora (strain SP-6)), this protein is Phosphoglycerate kinase.